The primary structure comprises 94 residues: MSCHVLERLEEVIRQRIREGNPQSYTYRLYSSGLHNVARKVGEEAVETAVAALAEGEERLVQEAADLLYHLLVLLAAKGLALADVCKELERRMK.

Belongs to the PRA-PH family.

The protein resides in the cytoplasm. The catalysed reaction is 1-(5-phospho-beta-D-ribosyl)-ATP + H2O = 1-(5-phospho-beta-D-ribosyl)-5'-AMP + diphosphate + H(+). Its pathway is amino-acid biosynthesis; L-histidine biosynthesis; L-histidine from 5-phospho-alpha-D-ribose 1-diphosphate: step 2/9. This is Phosphoribosyl-ATP pyrophosphatase from Pyrobaculum calidifontis (strain DSM 21063 / JCM 11548 / VA1).